Here is a 235-residue protein sequence, read N- to C-terminus: Protein mxl-3 (235 aa).

The segment at 18–49 (EKQFRKRHHSDSSDDDSSSPKSASPSMDDDRR) is disordered. A basic motif region spans residues 47–60 (DRRAHHNELERRRR). The bHLH domain occupies 47–98 (DRRAHHNELERRRRDHIKDHFTILKDAIPLLDGEKSSRALILKRAVEFIHVM). The interval 61 to 98 (DHIKDHFTILKDAIPLLDGEKSSRALILKRAVEFIHVM) is helix-loop-helix motif.

The protein belongs to the MAX family. As to quaternary structure, may form homodimer. Interacts (via N-terminus) with skn-1 isoforms a and c. As to expression, expressed in the intestine and in the AWC sensory neurons.

Its subcellular location is the nucleus. It is found in the cytoplasm. Transcription factor which regulates the expression of genes involved in lipid metabolism in response to nutrient availability. Binds to the E-box motif 5'-CACGTG-3'. Under well-fed conditions, binds to the promoter and represses the expression of lipase genes lipl-1, lipl-2, lipl-3 and to a lesser extent lipl-5, thereby preventing lipolysis. In response to a high-glucose diet, promotes fatty acid synthesis, elongation and desaturation by up-regulating transcription factor sbp-1 expression. Under well-fed conditions, acts remotely in the intestine to up-regulate the expression of chemoreceptor srh-234 gene in the ADL sensory neuron, possibly by regulating the insulin signaling pathway. The protein is Protein mxl-3 of Caenorhabditis elegans.